The chain runs to 278 residues: Large ribosomal subunit protein uL2 (278 aa).

Residues 211–278 (KRWLGKRPQS…LIIRRRKGSK (68 aa)) form a disordered region. The span at 258-270 (KTRDTKKASEKLI) shows a compositional bias: basic and acidic residues.

The protein belongs to the universal ribosomal protein uL2 family. In terms of assembly, part of the 50S ribosomal subunit. Forms a bridge to the 30S subunit in the 70S ribosome.

Functionally, one of the primary rRNA binding proteins. Required for association of the 30S and 50S subunits to form the 70S ribosome, for tRNA binding and peptide bond formation. It has been suggested to have peptidyltransferase activity; this is somewhat controversial. Makes several contacts with the 16S rRNA in the 70S ribosome. The protein is Large ribosomal subunit protein uL2 of Lactobacillus helveticus (strain DPC 4571).